We begin with the raw amino-acid sequence, 348 residues long: D-alanine--D-alanine ligase (348 aa).

In terms of domain architecture, ATP-grasp spans 136-344; the sequence is KSVFKSYNLP…LEKLVANLIE (209 aa). 171 to 226 is a binding site for ATP; sequence NKIISYPCFIKPANLGSSVGITKAYSKEEFIAGIEFAAKYDERIIVEKSIEGRELE. Mg(2+) contacts are provided by Asp297, Glu311, and Asn313.

Belongs to the D-alanine--D-alanine ligase family. The cofactor is Mg(2+). Requires Mn(2+) as cofactor.

The protein resides in the cytoplasm. The enzyme catalyses 2 D-alanine + ATP = D-alanyl-D-alanine + ADP + phosphate + H(+). It functions in the pathway cell wall biogenesis; peptidoglycan biosynthesis. In terms of biological role, cell wall formation. The polypeptide is D-alanine--D-alanine ligase (Prochlorococcus marinus (strain NATL2A)).